Reading from the N-terminus, the 160-residue chain is SsrA-binding protein (160 aa).

Belongs to the SmpB family.

The protein localises to the cytoplasm. Required for rescue of stalled ribosomes mediated by trans-translation. Binds to transfer-messenger RNA (tmRNA), required for stable association of tmRNA with ribosomes. tmRNA and SmpB together mimic tRNA shape, replacing the anticodon stem-loop with SmpB. tmRNA is encoded by the ssrA gene; the 2 termini fold to resemble tRNA(Ala) and it encodes a 'tag peptide', a short internal open reading frame. During trans-translation Ala-aminoacylated tmRNA acts like a tRNA, entering the A-site of stalled ribosomes, displacing the stalled mRNA. The ribosome then switches to translate the ORF on the tmRNA; the nascent peptide is terminated with the 'tag peptide' encoded by the tmRNA and targeted for degradation. The ribosome is freed to recommence translation, which seems to be the essential function of trans-translation. The polypeptide is SsrA-binding protein (Escherichia coli O139:H28 (strain E24377A / ETEC)).